A 167-amino-acid chain; its full sequence is Biotin carboxyl carrier protein of acetyl-CoA carboxylase (167 aa).

Residues 53–91 form a disordered region; sequence SGFSQERPIPTDPKKDTIKETTTENSETSTTTSSGDFIS. The span at 64–74 shows a compositional bias: basic and acidic residues; it reads DPKKDTIKETT. Low complexity predominate over residues 75-86; sequence TENSETSTTTSS. The 77-residue stretch at 87-163 folds into the Biotinyl-binding domain; the sequence is GDFISSPLVG…QFGSKLFRIA (77 aa). K129 is modified (N6-biotinyllysine).

As to quaternary structure, homodimer.

It participates in lipid metabolism; fatty acid biosynthesis. This protein is a component of the acetyl coenzyme A carboxylase complex; first, biotin carboxylase catalyzes the carboxylation of the carrier protein and then the transcarboxylase transfers the carboxyl group to form malonyl-CoA. The chain is Biotin carboxyl carrier protein of acetyl-CoA carboxylase (accB) from Chlamydia pneumoniae (Chlamydophila pneumoniae).